A 561-amino-acid chain; its full sequence is Putative transport protein AHA_2450 (561 aa).

The next 5 membrane-spanning stretches (helical) occupy residues 8–28, 37–57, 66–86, 90–110, and 161–181; these read LLHQSDSLLLFVVLAFGLLLG, IGNTIGVLFTALLFGQMGFEF, FMLFIFCVGIEAGPHFFSVFL, IHYITLTLVILLTALFLTVGL, and NMGIGYALTYLVGLVGLMLVV. RCK C-terminal domains lie at 206–291 and 293–376; these read SDNE…NYRN and KEVF…KIGF. Helical transmembrane passes span 386–406, 409–429, 450–470, 476–496, and 541–561; these read LVAFTTFFVLGLLIGSVSLVF, LEFGLGNAVGLLLAGILMGYL, LGLAVFMVSTGLKAGGGILDH, AVVLFSGMLVTTLPVLVGYLF, and TYAVANVMLTLAGSFIIGFWF.

This sequence belongs to the AAE transporter (TC 2.A.81) family. YbjL subfamily.

The protein localises to the cell membrane. In Aeromonas hydrophila subsp. hydrophila (strain ATCC 7966 / DSM 30187 / BCRC 13018 / CCUG 14551 / JCM 1027 / KCTC 2358 / NCIMB 9240 / NCTC 8049), this protein is Putative transport protein AHA_2450.